Here is an 88-residue protein sequence, read N- to C-terminus: Small ribosomal subunit protein uS15 (88 aa).

This sequence belongs to the universal ribosomal protein uS15 family. In terms of assembly, part of the 30S ribosomal subunit. Forms a bridge to the 50S subunit in the 70S ribosome, contacting the 23S rRNA.

Functionally, one of the primary rRNA binding proteins, it binds directly to 16S rRNA where it helps nucleate assembly of the platform of the 30S subunit by binding and bridging several RNA helices of the 16S rRNA. In terms of biological role, forms an intersubunit bridge (bridge B4) with the 23S rRNA of the 50S subunit in the ribosome. This Mycoplasma mobile (strain ATCC 43663 / 163K / NCTC 11711) (Mesomycoplasma mobile) protein is Small ribosomal subunit protein uS15.